The chain runs to 265 residues: Mlc titration factor A (265 aa).

Histidine 111, histidine 148, histidine 152, and glutamate 211 together coordinate Zn(2+).

It belongs to the MtfA family. As to quaternary structure, interacts with Mlc. Requires Zn(2+) as cofactor.

The protein resides in the cytoplasm. Involved in the modulation of the activity of the glucose-phosphotransferase system (glucose-PTS). Interacts with the transcriptional repressor Mlc, preventing its interaction with DNA and leading to the modulation of expression of genes regulated by Mlc, including ptsG, which encodes the PTS system glucose-specific EIICB component. In terms of biological role, shows zinc-dependent metallopeptidase activity. In Salmonella choleraesuis (strain SC-B67), this protein is Mlc titration factor A.